The primary structure comprises 279 residues: Probable endonuclease 4 (279 aa).

Zn(2+)-binding residues include His-69, His-109, Glu-145, Asp-179, His-182, His-216, Asp-229, His-231, and Glu-261.

This sequence belongs to the AP endonuclease 2 family. Zn(2+) serves as cofactor.

The catalysed reaction is Endonucleolytic cleavage to 5'-phosphooligonucleotide end-products.. Endonuclease IV plays a role in DNA repair. It cleaves phosphodiester bonds at apurinic or apyrimidinic (AP) sites, generating a 3'-hydroxyl group and a 5'-terminal sugar phosphate. This chain is Probable endonuclease 4, found in Desulforapulum autotrophicum (strain ATCC 43914 / DSM 3382 / VKM B-1955 / HRM2) (Desulfobacterium autotrophicum).